A 280-amino-acid chain; its full sequence is Succinate dehydrogenase [ubiquinone] iron-sulfur subunit, mitochondrial (280 aa).

Residues 1–28 constitute a mitochondrion transit peptide; the sequence is MAAVVALSLRRRLPATTLGGACLQASRG. The 2Fe-2S ferredoxin-type domain maps to 40–133; that stretch reads KKFAIYRWDP…VSKIYPLPHM (94 aa). Lys51 and Lys55 each carry N6-acetyllysine. [2Fe-2S] cluster is bound by residues Cys93, Cys98, Cys101, and Cys113. Residues 146–218 are interaction with SDHAF1; it reads FYAQYKSIEP…PAVLMQAYRW (73 aa). The 4Fe-4S ferredoxin-type domain occupies 176–206; the sequence is EREKLDGLYECILCACCSTSCPSYWWNGDKY. The [4Fe-4S] cluster site is built by Cys186, Cys189, and Cys192. Cys196 contacts [3Fe-4S] cluster. Trp201 is an a ubiquinone binding site. [3Fe-4S] cluster contacts are provided by Cys243 and Cys249. Cys253 contacts [4Fe-4S] cluster.

Belongs to the succinate dehydrogenase/fumarate reductase iron-sulfur protein family. Component of complex II composed of four subunits: the flavoprotein (FP) SDHA, iron-sulfur protein (IP) SDHB, and a cytochrome b560 composed of SDHC and SDHD. Interacts with SDHAF1; the interaction is required for iron-sulfur cluster incorporation into SDHB. As to quaternary structure, (Microbial infection) Interacts with JC virus small t antigen. The cofactor is [2Fe-2S] cluster. It depends on [3Fe-4S] cluster as a cofactor. [4Fe-4S] cluster serves as cofactor.

The protein resides in the mitochondrion inner membrane. The catalysed reaction is a quinone + succinate = fumarate + a quinol. The enzyme catalyses (R)-malate + a quinone = enol-oxaloacetate + a quinol. It catalyses the reaction (S)-malate + a quinone = enol-oxaloacetate + a quinol. The protein operates within carbohydrate metabolism; tricarboxylic acid cycle; fumarate from succinate (eukaryal route): step 1/1. Enol-oxaloacetate inhibits the succinate dehydrogenase activity. In terms of biological role, iron-sulfur protein (IP) subunit of the succinate dehydrogenase complex (mitochondrial respiratory chain complex II), responsible for transferring electrons from succinate to ubiquinone (coenzyme Q). SDH also oxidizes malate to the non-canonical enol form of oxaloacetate, enol-oxaloacetate. Enol-oxaloacetate, which is a potent inhibitor of the succinate dehydrogenase activity, is further isomerized into keto-oxaloacetate. The polypeptide is Succinate dehydrogenase [ubiquinone] iron-sulfur subunit, mitochondrial (SDHB) (Homo sapiens (Human)).